We begin with the raw amino-acid sequence, 588 residues long: Aspartate--tRNA ligase (588 aa).

Glu-172 lines the L-aspartate pocket. The aspartate stretch occupies residues 196–199 (QLFK). L-aspartate is bound at residue Arg-218. Residues 218 to 220 (RDE) and Gln-227 each bind ATP. An L-aspartate-binding site is contributed by His-449. Glu-483 contacts ATP. Residue Arg-490 participates in L-aspartate binding. An ATP-binding site is contributed by 535–538 (GLDR).

Belongs to the class-II aminoacyl-tRNA synthetase family. Type 1 subfamily. Homodimer.

It is found in the cytoplasm. It catalyses the reaction tRNA(Asp) + L-aspartate + ATP = L-aspartyl-tRNA(Asp) + AMP + diphosphate. In terms of biological role, catalyzes the attachment of L-aspartate to tRNA(Asp) in a two-step reaction: L-aspartate is first activated by ATP to form Asp-AMP and then transferred to the acceptor end of tRNA(Asp). This is Aspartate--tRNA ligase from Haemophilus influenzae (strain PittEE).